A 366-amino-acid polypeptide reads, in one-letter code: Chorismate synthase (366 aa).

Positions 48 and 54 each coordinate NADP(+). Residues 125–127, 238–239, Gly278, 293–297, and Arg319 contribute to the FMN site; these read RSS, NA, and KPTSS.

Belongs to the chorismate synthase family. As to quaternary structure, homotetramer. FMNH2 serves as cofactor.

The enzyme catalyses 5-O-(1-carboxyvinyl)-3-phosphoshikimate = chorismate + phosphate. It functions in the pathway metabolic intermediate biosynthesis; chorismate biosynthesis; chorismate from D-erythrose 4-phosphate and phosphoenolpyruvate: step 7/7. Catalyzes the anti-1,4-elimination of the C-3 phosphate and the C-6 proR hydrogen from 5-enolpyruvylshikimate-3-phosphate (EPSP) to yield chorismate, which is the branch point compound that serves as the starting substrate for the three terminal pathways of aromatic amino acid biosynthesis. This reaction introduces a second double bond into the aromatic ring system. The polypeptide is Chorismate synthase (Cellvibrio japonicus (strain Ueda107) (Pseudomonas fluorescens subsp. cellulosa)).